A 153-amino-acid polypeptide reads, in one-letter code: NADPH-dependent 7-cyano-7-deazaguanine reductase (153 aa).

C51 acts as the Thioimide intermediate in catalysis. D58 (proton donor) is an active-site residue. Residues 73 to 75 (LES) and 92 to 93 (HE) each bind substrate.

The protein belongs to the GTP cyclohydrolase I family. QueF type 1 subfamily.

It localises to the cytoplasm. The enzyme catalyses 7-aminomethyl-7-carbaguanine + 2 NADP(+) = 7-cyano-7-deazaguanine + 2 NADPH + 3 H(+). It functions in the pathway tRNA modification; tRNA-queuosine biosynthesis. In terms of biological role, catalyzes the NADPH-dependent reduction of 7-cyano-7-deazaguanine (preQ0) to 7-aminomethyl-7-deazaguanine (preQ1). The chain is NADPH-dependent 7-cyano-7-deazaguanine reductase from Bradyrhizobium diazoefficiens (strain JCM 10833 / BCRC 13528 / IAM 13628 / NBRC 14792 / USDA 110).